Consider the following 134-residue polypeptide: Fluoride-specific ion channel FluC 3 (134 aa).

Helical transmembrane passes span 4–24, 35–55, 67–87, and 100–120; these read LIIL…FIML, MDIF…TSFF, MVGT…FGAV, and ICYL…GLMI. Na(+)-binding residues include G74 and S77.

This sequence belongs to the fluoride channel Fluc/FEX (TC 1.A.43) family.

The protein localises to the cell inner membrane. The enzyme catalyses fluoride(in) = fluoride(out). Its activity is regulated as follows. Na(+) is not transported, but it plays an essential structural role and its presence is essential for fluoride channel function. In terms of biological role, fluoride-specific ion channel. Important for reducing fluoride concentration in the cell, thus reducing its toxicity. The chain is Fluoride-specific ion channel FluC 3 from Yersinia pseudotuberculosis serotype I (strain IP32953).